The sequence spans 37 residues: Photosystem II reaction center protein Y (37 aa).

The chain crosses the membrane as a helical span at residues 4–22; it reads AIVVFAPIIAAVAWVVFNI.

It belongs to the PsbY family. As to quaternary structure, PSII is composed of 1 copy each of membrane proteins PsbA, PsbB, PsbC, PsbD, PsbE, PsbF, PsbH, PsbI, PsbJ, PsbK, PsbL, PsbM, PsbT, PsbX, PsbY, Psb30/Ycf12, peripheral proteins PsbO, CyanoQ (PsbQ), PsbU, PsbV and a large number of cofactors. It forms dimeric complexes.

The protein resides in the cellular thylakoid membrane. Loosely associated component of the core of photosystem II (PSII), it is not always seen in crystals. PSII is a light-driven water plastoquinone oxidoreductase, using light energy to abstract electrons from H(2)O, generating a proton gradient subsequently used for ATP formation. The sequence is that of Photosystem II reaction center protein Y from Prochlorococcus marinus (strain MIT 9312).